The sequence spans 209 residues: Protein-L-isoaspartate O-methyltransferase (209 aa).

S59 is an active-site residue.

The protein belongs to the methyltransferase superfamily. L-isoaspartyl/D-aspartyl protein methyltransferase family.

It localises to the cytoplasm. The catalysed reaction is [protein]-L-isoaspartate + S-adenosyl-L-methionine = [protein]-L-isoaspartate alpha-methyl ester + S-adenosyl-L-homocysteine. Catalyzes the methyl esterification of L-isoaspartyl residues in peptides and proteins that result from spontaneous decomposition of normal L-aspartyl and L-asparaginyl residues. It plays a role in the repair and/or degradation of damaged proteins. The sequence is that of Protein-L-isoaspartate O-methyltransferase from Helicobacter pylori (strain G27).